The following is a 205-amino-acid chain: Ribosomal RNA small subunit methyltransferase G (205 aa).

S-adenosyl-L-methionine contacts are provided by residues glycine 70, leucine 75, 121–122 (IE), and arginine 136.

Belongs to the methyltransferase superfamily. RNA methyltransferase RsmG family.

It localises to the cytoplasm. The enzyme catalyses guanosine(527) in 16S rRNA + S-adenosyl-L-methionine = N(7)-methylguanosine(527) in 16S rRNA + S-adenosyl-L-homocysteine. Its function is as follows. Specifically methylates the N7 position of guanine in position 527 of 16S rRNA. The polypeptide is Ribosomal RNA small subunit methyltransferase G (Methylococcus capsulatus (strain ATCC 33009 / NCIMB 11132 / Bath)).